The chain runs to 150 residues: UPF0756 membrane protein ABSDF1616 (150 aa).

The next 4 membrane-spanning stretches (helical) occupy residues 1-21 (MLAQ…CGLL), 45-65 (FFPY…TIGV), 83-103 (FISF…WLGG), and 115-135 (VVAG…GVPV).

The protein belongs to the UPF0756 family.

Its subcellular location is the cell membrane. This chain is UPF0756 membrane protein ABSDF1616, found in Acinetobacter baumannii (strain SDF).